A 557-amino-acid chain; its full sequence is MSVIGLWLVTVTATLSLFVWQLIFLLSIPKSIVVCLIAESLFFVAWFFYWTVIYPRYLTPFRHLPTPASRSILTGNQNGLFTENSWDVARRVSQTVPNSGLIRYYVALSNERILVTNTRALSDVLTNHSHDFGKSNLAKFALKRLTGNGLGFLEGNEHKVHRKNLMPAFTRKHVKELTPIFWDKAMEMVKGMEAEVRCGKDTSTQGTGIVEIHDWATRATLDIIGTAGFGYDFGTLHNPSNEIGQQYKKMFLEPSTAFNWLELLGNYIDFRFLMTLPVKKNRDLTAGSNFMREIAKKVIRERRHELFQRMTSQAGNMKNTKKDIITTALASDCFTDDQLVDHVMAFLVAGHESTATAFEWAMYELGHRPEMQKRVRDEVRTYLPSPSAGGVKNITFESVPYLQAICNEVLRLYPFLPFATRVAEKDTWVADQFVPKGTIVAYAAHISNRDSELWSGPALDAFDPERWMEPGKESSGGANSNYAMLTFSAGPKSCIGEAWTRAELPCLVGAMVGSFEIELVEGKQADGTVYPTVDFKMGKVLKSRDGVFVRLRRLEDW.

Helical transmembrane passes span 6–26 and 32–52; these read LWLV…IFLL and IVVC…YWTV. Asn127 and Asn393 each carry an N-linked (GlcNAc...) asparagine glycan. Cys494 contacts heme.

It belongs to the cytochrome P450 family. Heme is required as a cofactor.

Its subcellular location is the membrane. Its pathway is secondary metabolite biosynthesis. In terms of biological role, cytochrome P450 monooxygenase; part of the gene cluster that mediates the biosynthesis of fusarielins F, G and H, decaketide compounds with 5 methylations and a decaline core that act as mycoestrogens as they stimulate growth of MCF-7 breast cancer cells. The initial compound in the pathway is produced by the reducing polyketide synthase FSL1. FSL1 lacks an active enoyl reductase (ER) domain and biosynthesis of fusarielins relies on the trans-acting enoyl reductase FSL5, before it is released through hydrolysis catalyzed by the thioesterase FSL2. Fusarielins F, G, and H have a C11=C12 cis double bond and is fully reduced between C10 and C11 and between C12 and C13. FSL3 can be involved in the formation of the C11=C12 cis double bond by moving a hypothetical C10=C11 or C12=C13 trans double bond to form prefusarielin. Prefusarielin is oxygenated at C15 and C16 by FSL4, resulting in fusarielin F, which subsequently is epoxidized into fusarielin G by the same enzyme. The final step in the pathway is a reduction of the carboxylic acid moiety to yield fusarielin H via a still undetermined mechanism. This chain is Cytochrome P450 monooxygenase FSL4, found in Gibberella zeae (strain ATCC MYA-4620 / CBS 123657 / FGSC 9075 / NRRL 31084 / PH-1) (Wheat head blight fungus).